The chain runs to 512 residues: UDP-N-acetylmuramate--L-alanine ligase (512 aa).

132–138 serves as a coordination point for ATP; that stretch reads GAHGKTT.

This sequence belongs to the MurCDEF family.

The protein resides in the cytoplasm. It catalyses the reaction UDP-N-acetyl-alpha-D-muramate + L-alanine + ATP = UDP-N-acetyl-alpha-D-muramoyl-L-alanine + ADP + phosphate + H(+). It participates in cell wall biogenesis; peptidoglycan biosynthesis. In terms of biological role, cell wall formation. This Bifidobacterium longum subsp. infantis (strain ATCC 15697 / DSM 20088 / JCM 1222 / NCTC 11817 / S12) protein is UDP-N-acetylmuramate--L-alanine ligase.